Here is a 240-residue protein sequence, read N- to C-terminus: Fibronectin type III domain-containing protein 5 (240 aa).

Over residues 1–10 (MQAARGGAGR) the composition is skewed to gly residues. Positions 1–30 (MQAARGGAGRPGREGRGLERECERSPGVGA) are disordered. The segment covering 11–24 (PGREGRGLERECER) has biased composition (basic and acidic residues). One can recognise a Fibronectin type-III domain in the interval 64-155 (APVNVTVRHL…EPVLFKTPRE (92 aa)). N-linked (GlcNAc...) asparagine glycosylation is found at Asn-67 and Asn-112. The chain crosses the membrane as a helical span at residues 181–201 (GEVLIIVVVLFMWAGVIALFC). Positions 210-221 (NEPNNNKEKTKS) are enriched in basic and acidic residues. Positions 210 to 240 (NEPNNNKEKTKSASETSTPEHQGGGLLRSKI) are disordered. Positions 231-240 (QGGGLLRSKI) are enriched in gly residues. The Microbody targeting signal signature appears at 238–240 (SKI).

Dimer; may exist in other oligomeric forms. N-Glycosylated. In terms of processing, the extracellular domain is cleaved and released from the cell membrane.

The protein localises to the cell membrane. It is found in the peroxisome membrane. The protein resides in the secreted. Its function is as follows. Mediates beneficial effects of muscular exercise. Induces browning of white adipose tissue by stimulating UCP1 expression, at least in part, via the nuclear receptor PPARA. The sequence is that of Fibronectin type III domain-containing protein 5 (Fndc5) from Rattus norvegicus (Rat).